We begin with the raw amino-acid sequence, 134 residues long: Cell division protein SepF 1 (134 aa).

The protein belongs to the SepF family. In terms of assembly, homodimer. Interacts with FtsZ.

It is found in the cytoplasm. Functionally, cell division protein that is part of the divisome complex and is recruited early to the Z-ring. Probably stimulates Z-ring formation, perhaps through the cross-linking of FtsZ protofilaments. Its function overlaps with FtsA. In Streptomyces avermitilis (strain ATCC 31267 / DSM 46492 / JCM 5070 / NBRC 14893 / NCIMB 12804 / NRRL 8165 / MA-4680), this protein is Cell division protein SepF 1.